A 308-amino-acid chain; its full sequence is Ribonuclease Z (308 aa).

Zn(2+) is bound by residues histidine 63, histidine 65, aspartate 67, histidine 68, histidine 141, aspartate 212, and histidine 270. Residue aspartate 67 is the Proton acceptor of the active site.

Belongs to the RNase Z family. In terms of assembly, homodimer. It depends on Zn(2+) as a cofactor.

It catalyses the reaction Endonucleolytic cleavage of RNA, removing extra 3' nucleotides from tRNA precursor, generating 3' termini of tRNAs. A 3'-hydroxy group is left at the tRNA terminus and a 5'-phosphoryl group is left at the trailer molecule.. Zinc phosphodiesterase, which displays some tRNA 3'-processing endonuclease activity. Probably involved in tRNA maturation, by removing a 3'-trailer from precursor tRNA. The sequence is that of Ribonuclease Z from Pediococcus pentosaceus (strain ATCC 25745 / CCUG 21536 / LMG 10740 / 183-1w).